A 630-amino-acid chain; its full sequence is Very-long-chain aldehyde decarbonylase GL1-7 (630 aa).

4 helical membrane passes run 93 to 113 (LYLDDQIILNGLLFYLGYAII), 126 to 146 (GALITILLHMGPVEFLYYWFH), 185 to 205 (FLLFSISILPPIFMGCGSVLA), and 325 to 345 (VWYMWMLWPVAWLSMVLAWIY). Residues 133-272 (LHMGPVEFLY…MPFYDYIYNT (140 aa)) form the Fatty acid hydroxylase domain.

Belongs to the sterol desaturase family. In terms of assembly, homodimer. Expressed in panicles at low levels.

It localises to the endoplasmic reticulum membrane. It catalyses the reaction a long-chain fatty aldehyde + 2 NADPH + O2 + H(+) = a long-chain alkane + formate + 2 NADP(+) + H2O. Functionally, aldehyde decarbonylase involved in the conversion of aldehydes to alkanes. Core component of a very-long-chain alkane synthesis complex. This Oryza sativa subsp. japonica (Rice) protein is Very-long-chain aldehyde decarbonylase GL1-7.